Reading from the N-terminus, the 410-residue chain is LL-diaminopimelate aminotransferase (410 aa).

Tyr-15 and Gly-42 together coordinate substrate. Pyridoxal 5'-phosphate is bound by residues Tyr-72, 108 to 109 (SK), Tyr-132, Asn-187, Tyr-218, and 246 to 248 (SFS). 3 residues coordinate substrate: Lys-109, Tyr-132, and Asn-187. Position 249 is an N6-(pyridoxal phosphate)lysine (Lys-249). Residues Arg-257 and Asn-292 each coordinate pyridoxal 5'-phosphate. Residues Asn-292 and Arg-388 each coordinate substrate.

Belongs to the class-I pyridoxal-phosphate-dependent aminotransferase family. LL-diaminopimelate aminotransferase subfamily. In terms of assembly, homodimer. Pyridoxal 5'-phosphate serves as cofactor.

The catalysed reaction is (2S,6S)-2,6-diaminopimelate + 2-oxoglutarate = (S)-2,3,4,5-tetrahydrodipicolinate + L-glutamate + H2O + H(+). It functions in the pathway amino-acid biosynthesis; L-lysine biosynthesis via DAP pathway; LL-2,6-diaminopimelate from (S)-tetrahydrodipicolinate (aminotransferase route): step 1/1. Functionally, involved in the synthesis of meso-diaminopimelate (m-DAP or DL-DAP), required for both lysine and peptidoglycan biosynthesis. Catalyzes the direct conversion of tetrahydrodipicolinate to LL-diaminopimelate. This chain is LL-diaminopimelate aminotransferase, found in Thermosynechococcus vestitus (strain NIES-2133 / IAM M-273 / BP-1).